Here is a 210-residue protein sequence, read N- to C-terminus: Outer-membrane lipoprotein LolB (210 aa).

An N-terminal signal peptide occupies residues 1–29; sequence MSLISNNEERSLRVRYCIAIALSALLISG. C30 carries N-palmitoyl cysteine lipidation. The S-diacylglycerol cysteine moiety is linked to residue C30.

The protein belongs to the LolB family. In terms of assembly, monomer.

It is found in the cell outer membrane. Functionally, plays a critical role in the incorporation of lipoproteins in the outer membrane after they are released by the LolA protein. The sequence is that of Outer-membrane lipoprotein LolB from Coxiella burnetii (strain RSA 493 / Nine Mile phase I).